A 427-amino-acid chain; its full sequence is Tol-Pal system protein TolB (427 aa).

The signal sequence occupies residues 1–23 (MKLLKRLVSVFAIVLAVGSNAFA).

Belongs to the TolB family. The Tol-Pal system is composed of five core proteins: the inner membrane proteins TolA, TolQ and TolR, the periplasmic protein TolB and the outer membrane protein Pal. They form a network linking the inner and outer membranes and the peptidoglycan layer.

It is found in the periplasm. Its function is as follows. Part of the Tol-Pal system, which plays a role in outer membrane invagination during cell division and is important for maintaining outer membrane integrity. The polypeptide is Tol-Pal system protein TolB (Haemophilus influenzae (strain ATCC 51907 / DSM 11121 / KW20 / Rd)).